The following is a 947-amino-acid chain: Serine-aspartate repeat-containing protein C (947 aa).

Residues 1-50 (MNNKKTATNRKGMIPNRLNKFSIRKYSVGTASILVGTTLIFGLSGHEAKA) form the signal peptide. Positions 21-32 (FSIRKYSVGTAS) match the YSIRK-G/S signaling motif motif. Positions 51–164 (AEHTNGELNQ…STTPKTTTIK (114 aa)) are disordered. The ligand binding A region stretch occupies residues 51 to 495 (AEHTNGELNQ…GSSTANGDQK (445 aa)). Over residues 56–71 (GELNQSKNETTAPSEN) the composition is skewed to polar residues. The span at 72–83 (KTTKKVDSRQLK) shows a compositional bias: basic and acidic residues. Residues 84–155 (DNTQTATADQ…SNLTQAKDVS (72 aa)) are compositionally biased toward polar residues. 2 consecutive CNA-B domains span residues 496–606 (KYNL…YKTP) and 607–717 (KYSL…EEET). The disordered stretch occupies residues 678–927 (TQTGTNTTED…NNSNNGTLFG (250 aa)). Acidic residues-rich tracts occupy residues 685–695 (TEDDKDADGGE) and 712–886 (YYEE…DSDS). The short motif at 910–914 (LPETG) is the LPXTG sorting signal element. Residues 912–927 (ETGSENNNSNNGTLFG) show a composition bias toward low complexity. Thr913 bears the Pentaglycyl murein peptidoglycan amidated threonine mark. Positions 914-947 (GSENNNSNNGTLFGGLFAALGSLLLFGRRKKQNK) are cleaved as a propeptide — removed by sortase.

It belongs to the serine-aspartate repeat-containing protein (SDr) family. As to quaternary structure, homodimerizes; via N2-Domain. Interacts with host NRXN1; this interaction mediates bacterial attachment to host cells.

The protein localises to the secreted. The protein resides in the cell wall. Cell surface-associated calcium-binding protein which plays an important role in adhesion and pathogenesis. Mediates interactions with components of the extracellular matrix such as host NRXN1 to promote bacterial adhesion. The protein is Serine-aspartate repeat-containing protein C (sdrC) of Staphylococcus aureus (strain Newman).